Reading from the N-terminus, the 585-residue chain is Arginine--tRNA ligase (585 aa).

Positions 131-141 (ANPTGPMHVGH) match the 'HIGH' region motif.

It belongs to the class-I aminoacyl-tRNA synthetase family. As to quaternary structure, monomer.

It localises to the cytoplasm. It carries out the reaction tRNA(Arg) + L-arginine + ATP = L-arginyl-tRNA(Arg) + AMP + diphosphate. The protein is Arginine--tRNA ligase of Agrobacterium fabrum (strain C58 / ATCC 33970) (Agrobacterium tumefaciens (strain C58)).